The following is a 182-amino-acid chain: Bifunctional protein PyrR (182 aa).

A PRPP-binding motif is present at residues 98–110; that stretch reads VVLVDDVLFTGRS.

It belongs to the purine/pyrimidine phosphoribosyltransferase family. PyrR subfamily.

It carries out the reaction UMP + diphosphate = 5-phospho-alpha-D-ribose 1-diphosphate + uracil. Its function is as follows. Regulates the transcription of the pyrimidine nucleotide (pyr) operon in response to exogenous pyrimidines. In terms of biological role, also displays a weak uracil phosphoribosyltransferase activity which is not physiologically significant. The chain is Bifunctional protein PyrR from Dehalococcoides mccartyi (strain ATCC BAA-2100 / JCM 16839 / KCTC 5957 / BAV1).